We begin with the raw amino-acid sequence, 361 residues long: Protein RecA (361 aa).

An ATP-binding site is contributed by 77-84; that stretch reads GPESSGKT.

Belongs to the RecA family.

The protein localises to the cytoplasm. In terms of biological role, can catalyze the hydrolysis of ATP in the presence of single-stranded DNA, the ATP-dependent uptake of single-stranded DNA by duplex DNA, and the ATP-dependent hybridization of homologous single-stranded DNAs. It interacts with LexA causing its activation and leading to its autocatalytic cleavage. This is Protein RecA from Sinorhizobium fredii (strain NBRC 101917 / NGR234).